We begin with the raw amino-acid sequence, 338 residues long: tRNA pseudouridine synthase D (338 aa).

D79 (nucleophile) is an active-site residue. The region spanning 154–303 is the TRUD domain; that stretch reads GVPNYFGEQR…EEAWRANILY (150 aa).

This sequence belongs to the pseudouridine synthase TruD family.

It catalyses the reaction uridine(13) in tRNA = pseudouridine(13) in tRNA. In terms of biological role, responsible for synthesis of pseudouridine from uracil-13 in transfer RNAs. The protein is tRNA pseudouridine synthase D of Legionella pneumophila (strain Lens).